The primary structure comprises 158 residues: Anti-tumor lectin (158 aa).

Glutamine 1 bears the Blocked amino end (Gln) mark. The Galectin domain occupies 12–155 (TSVDLAAPVT…STVVEAVTYT (144 aa)). The N-acetyl-alpha-neuraminyl-(2-&gt;3)-beta-D-galactosyl-(1-&gt;4)-beta-D-glucose site is built by asparagine 43, histidine 59, arginine 63, asparagine 72, arginine 74, tryptophan 80, and glutamate 83.

In terms of assembly, homodimer. Detected in the fruiting body.

Functionally, anti-tumor lectin with DNase activity. Inhibits the growth of several tumor cell lines in vitro. Induces lymphocyte infiltration and necrosis of tumor cells in a mouse tumor model. Induces apoptosis in HeLa cells. Binds N-acetylneuraminyl lactose (N-acetyl-alpha-neuraminyl-(2-&gt;3)-beta-D-galactosyl-(1-&gt;4)-beta-D-glucose). The sequence is that of Anti-tumor lectin from Cyclocybe aegerita (Black poplar mushroom).